The chain runs to 276 residues: Small ribosomal subunit protein uS2 (276 aa).

A disordered region spans residues 255 to 276 (ASATATAAPTEAGAPEPTTDPS).

This sequence belongs to the universal ribosomal protein uS2 family.

The chain is Small ribosomal subunit protein uS2 from Mycolicibacterium paratuberculosis (strain ATCC BAA-968 / K-10) (Mycobacterium paratuberculosis).